A 2670-amino-acid polypeptide reads, in one-letter code: MNEMSSFLHIGDIVSLYAEGSVNGFISTLGLVDDRCVVEPAAGDLDNPPKKFRDCLFKVCPMNRYSAQKQYWKAKQTKQDKEKIADVVLLQKLQHAAQMEQKQNDTENKKVHGDVVKYGSVIQLLHMKSNKYLTVNKRLPALLEKNAMRVTLDATGNEGSWLFIQPFWKLRSNGDNVVVGDKVILNPVNAGQPLHASNYELSDNAGCKEVNSVNCNTSWKINLFMQFRDHLEEVLKGGDVVRLFHAEQEKFLTCDEYRGKLQVFLRTTLRQSATSATSSNALWEVEVVHHDPCRGGAGHWNGLYRFKHLATGNYLAAEENPSYKGDVSDPKAAGLGAQGRTGRRNAGEKIKYRLVAVPHGNDIASLFELDPTTLQKTDSFVPRNSYVRLRHLCTNTWIQSTNAPIDVEEERPIRLMLGTCPTKEDKEAFAIVSVPVSEIRDLDFANDASSMLASAVEKLNEGFISQNDRRFVIQLLEDLVFFVSDVPNNGQNVLDIMVTKPNRERQKLMREQNILKQIFGILKAPFRDKGGEGPLVRLEELSDQKNAPYQYMFRLCYRVLRHSQEDYRKNQEHIAKQFGMMQSQIGYDILAEDTITALLHNNRKLLEKHITKTEVETFVSLVRKNREPRFLDYLSDLCVSNRIAIPVTQELICKCVLDPKNSDILIQTELRPVKEMAQSHEYLSIEYSEEEVWLTWTDRNNEHHEKSVRQLAQEARAGNAHDENVLSYYRYQLKLFARMCLDRQYLAIDEISKQLGVELLFLCMADEMLPFDLRASFCHLMLHVHVDRDPQELVTPVKFARLWTEIPTAITIKDYDSNLNASRDDKKNKFASTMEFVEDYLNNVVSEAVPFANDEKNILTFEVVSLAHNLIYFGFYSFSELLRLTRTLLGIIDCIQAPAAMLQAYEEPGGKNVRRSIQGVGHMMSTMVLSRKQSVFGASSLPAGVGVPEQLDRSKFEDNEHTVVMETKLKILEILQFILNVRLDYRISYLLSVFKKEFVEVFPMQDSGADGTAPAFDSSTATMNLDRIGEQAEAMFGVGKTSSMLEVDDEGGRMFLRVLLHLTMHDYPSLVSGALQLLFKHFSQRQEAMHTFKQVQLLISAQDVENYKVIKSELDRLRTMVEKSELWVDKKGSVKGEEVEAGATKDKKERPSDEEGFLQPHGEKSSENYQIVKGILERLNKMCGVGEQMRKKQQRLLKNMDAHKVMLDLLQIPYDKSDNKMLEILRYTHQFLQKFCAGNPGNQALLHKHLQLFLTPGLLEAETMQHIFLNNYQLCSEISEPVLQHFVHLLATHGRHVQYLDFLHTVIKAEGKYVKKCQDMIMTELTNAGDDVVVFYNDKASLAHLLDMMKAARDGVEDHSPLMYHISLVDLLAACAEGKNVYTEIKCTSLLPLEDVVTVVTHEDCITEVKMAYVNFVNHCYVDTEVEMKEIYTSNHIWTLFENFTLDMALVCNKREKRLSDPTLEKYVLTVVLDTISAFFSSPFSENSTSLQTHQTIVVQLLQSTTRLLECPWLQQQHKGSVEACVRTLAMVAKSRAILLPMDLDAHMSALLSSGGSCSAAAQRSAANYKTATRTFPRVIPTANQWDYKNIIEKLQDIIMALEERLKPLVQAELSVLVDMLHWPELLFPEGSEAYQRCESGGFLSKLIRHTKGLMESEEKLCVKVLRTLQQMLLKKSKFGDRGNQLRKMLLQNYLQNRKSGARGELTDPTGSGLDQDWSAIAATQCRLDKEGATKLVCDLITSTKNEKIFQESIGLAIRLLDGGNTEIQKSFYNLMTSDKKSERFFKVLHDRMKRAQQETKSTVAVNMSDLGSQPREDREPADPATKGRVSSFSMPSSSRYLLGLGLHRGHDMSERAQNNEMGTSVLIMRPILRFLQLLCENHNRDLQNFLRCQNNKTNYNLVCETLQFLDIMCGSTTGGLGLLGLYINEDNVGLVIQTLETLTEYCQGPCHENQTCIVTHESNGIDIITALILNDISPLCKYRMDLVLQLKDNASKLLLALMESRHDSENAERILISLRPQELVDVIKKAYLQEEERENSEVSPREVGHNIYILALQLSRHNKQLQHLLKPVRRIQEEEAEGISSMLSLNNKQLSQMLKSSAPAQEEEEDPLAYYENHTSQIEIVRQDRSMEQIVFPVPAICQFLTEETKHRLFTTTEQDEQGSKVSDFFDQSSFLHNEMEWQRRLRSMPLIYWFSRRMTLWGSISFNLAVFINIIIAFFYPYVEGASTGVLGSPLISLLFWILICFSIAALFTKRYSVRPLIVALILRSIYYLGIGPTLNILGALNLTNKIVFVVSFVGNRGTFIRGYKAMVMDMEFLYHVGYILTSVLGLFAHELFYSILLFDLIYREETLFNVIKSVTRNGRSILLTALLALILVYLFSIVGFLFLKDDFILEVDRLPGNHSRASPLGMPHGAATFMGTCSGDKMDCVSEVSVPEILEEDEEPDSTERACDTLLMCIVTVMNHGLRNGGGVGDILRKPSKDESLFPARVVYDLLFFFIVIIIVLNLIFGVIIDTFADLRSEKQKKEEILKTTCFICGLERDKFDNKTVSFEEHIKLEHNMWNYLYFIVLVRVKNKTDYTGPESYVAQMIKNKNLDWFPRMRAMSLVSGEGEGEQNEIRILQEKLGSTMKLVSHLTSQLNELKEQMTEQRKRRQRLGFVDVQNCMSR.

At 1–2233 the chain is on the cytoplasmic side; the sequence is MNEMSSFLHI…YVEGASTGVL (2233 aa). 5 consecutive MIR domains span residues 113–173, 174–224, 232–288, 295–372, and 378–434; these read GDVV…LRSN, GDNV…INLF, EEVL…VEVV, GGAG…LDPT, and DSFV…IVSV. Residues Arg266, Leu269, and Arg270 each contribute to the 1D-myo-inositol 1,4,5-trisphosphate site. Positions 503, 507, 510, 567, 568, and 569 each coordinate 1D-myo-inositol 1,4,5-trisphosphate. Ca(2+) is bound at residue Arg743. Ser916 and Ser934 each carry phosphoserine. 2 residues coordinate Ca(2+): Glu1122 and Glu1125. Residues 1138–1153 show a composition bias toward basic and acidic residues; sequence EVEAGATKDKKERPSD. Disordered regions lie at residues 1138-1164 and 1807-1835; these read EVEA…HGEK and NMSD…SFSM. Ser1813, Ser1832, and Ser1834 each carry phosphoserine. Ca(2+) contacts are provided by Glu1881 and Glu1945. ATP is bound by residues Ala1995, Glu2148, and Lys2151. A helical membrane pass occupies residues 2234–2254; it reads GSPLISLLFWILICFSIAALF. Residues 2255–2262 lie on the Extracellular side of the membrane; it reads TKRYSVRP. The helical transmembrane segment at 2263–2283 threads the bilayer; the sequence is LIVALILRSIYYLGIGPTLNI. Over 2284–2292 the chain is Cytoplasmic; sequence LGALNLTNK. Residues 2293–2310 traverse the membrane as a helical segment; sequence IVFVVSFVGNRGTFIRGY. The Extracellular portion of the chain corresponds to 2311-2324; it reads KAMVMDMEFLYHVG. The helical transmembrane segment at 2325–2345 threads the bilayer; the sequence is YILTSVLGLFAHELFYSILLF. The Cytoplasmic segment spans residues 2346-2367; that stretch reads DLIYREETLFNVIKSVTRNGRS. Residues 2368-2388 traverse the membrane as a helical segment; the sequence is ILLTALLALILVYLFSIVGFL. The Extracellular portion of the chain corresponds to 2389–2495; the sequence is FLKDDFILEV…ESLFPARVVY (107 aa). A disulfide bridge connects residues Cys2454 and Cys2460. A helical transmembrane segment spans residues 2496–2516; that stretch reads DLLFFFIVIIIVLNLIFGVII. At 2517 to 2670 the chain is on the cytoplasmic side; the sequence is DTFADLRSEK…FVDVQNCMSR (154 aa). Cys2537 and Phe2538 together coordinate ATP. Cys2537 contributes to the Zn(2+) binding site. 2 residues coordinate Zn(2+): Cys2540 and His2557. Lys2559, His2562, Asn2563, and Met2564 together coordinate ATP. Zn(2+) is bound at residue His2562. Residue Thr2580 participates in Ca(2+) binding. 2 positions are modified to phosphoserine: Ser2608 and Ser2669.

Belongs to the InsP3 receptor family. As to quaternary structure, homodimer. Homotetramer. Interacts with TRPC1, TRPC3, TRPC4. Interacts with TRPV4. Interacts with SIGMAR1. Found in a complex with AKT1 and PML; this interaction modulates IP3R3-phosphorylation and in turn ITPR3-dependent calcium release. Interacts with IRAG2 (via coiled-coil domain). Interacts with CABP1. Interacts with TMBIM4/LFG4. Interacts with CEMIP. Interacts with TESPA1. Interacts with TMEM203. Interacts with BOK; regulates ITPR3 expression. Interacts with BCL2L10. Interacts with CHGA and CHGB. Phosphorylated by AKT1 on serine and/or threonine residues.

The protein localises to the endoplasmic reticulum membrane. The protein resides in the cytoplasmic vesicle. It localises to the secretory vesicle membrane. The enzyme catalyses Ca(2+)(in) = Ca(2+)(out). With respect to regulation, inositol 1,4,5-trisphosphate-gated calcium channel is regulated by cytosolic calcium in a biphasic manner. At low concentrations, cytosolic calcium binds at a high-affinity juxtamembrane domain (JD) calcium binding site, allowing ITPR3 to activate by escaping a low-energy resting state through an ensemble of preactivated states. At high cytosolic calcium concentrations, ITPR3 preferentially enters an inhibited state stabilized by calcium binding at a second, low-affinity cytoplasmic domain (CD) calcium binding site. Functionally, inositol 1,4,5-trisphosphate-gated calcium channel that, upon 1D-myo-inositol 1,4,5-trisphosphate binding, transports calcium from the endoplasmic reticulum lumen to cytoplasm, thus releasing the intracellular calcium and therefore participates in cellular calcium ion homeostasis. 1D-myo-inositol 1,4,5-trisphosphate binds to the ligand-free channel without altering its global conformation, yielding the low-energy resting state, then progresses through resting-to preactivated transitions to the higher energy preactivated state, which increases affinity for calcium, promoting binding of the low basal cytosolic calcium at the juxtamembrane domain (JD) site, favoring the transition through the ensemble of high-energy intermediate states along the trajectory to the fully-open activated state. Upon opening, releases calcium in the cytosol where it can bind to the low-affinity cytoplasmic domain (CD) site and stabilizes the inhibited state to terminate calcium release. The polypeptide is Inositol 1,4,5-trisphosphate-gated calcium channel ITPR3 (Mus musculus (Mouse)).